A 434-amino-acid chain; its full sequence is BEN domain-containing protein 7 (434 aa).

Glycyl lysine isopeptide (Lys-Gly) (interchain with G-Cter in SUMO2) cross-links involve residues lysine 16, lysine 56, and lysine 85. Disordered stretches follow at residues 96–151 (PQRS…SNGE) and 212–262 (SRKR…ERTS). Residues 97 to 150 (QRSNSSTEASQGLHSNSRGAWNELPTQSGQFSGQSGPRSRTFQTQPHISASSNG) are compositionally biased toward polar residues. The span at 212–222 (SRKRNKKKKVL) shows a compositional bias: basic residues. Lysine 244 participates in a covalent cross-link: Glycyl lysine isopeptide (Lys-Gly) (interchain with G-Cter in SUMO2). The BEN domain occupies 289-399 (GFDVFMPKSQ…RRLKRGSAEV (111 aa)). Threonine 326 carries the post-translational modification Phosphothreonine. Serine 330 bears the Phosphoserine mark. Residues 414-434 (TGHTFVIKRETPEDPEPGSVA) form a disordered region.

The polypeptide is BEN domain-containing protein 7 (Bend7) (Mus musculus (Mouse)).